A 586-amino-acid polypeptide reads, in one-letter code: BTB/POZ domain and ankyrin repeat-containing protein NPR1 (586 aa).

Positions 63–139 (SDADIVVEGI…VYTGKLKPSP (77 aa)) constitute a BTB domain. The segment at 142 to 156 (VSTCVHNVCAHDACR) adopts a C2HC NPR-type zinc-finger fold. Zn(2+) is bound by residues cysteine 145, cysteine 150, histidine 152, and cysteine 155. 3 ANK repeats span residues 266–296 (KRIRRIHKALDSDDVELVKLLLTESNITLDE), 298–325 (NALHYAAAYCDPKVVTEVLALGLADVNL), and 329–358 (RGYTALHIAVMRKEPSIIVLLLTKGARASE). The tract at residues 388-522 (EANKDRICID…LDKFIDDDLP (135 aa)) is salicylic acid-binding core (SBC). Arginine 433 is a binding site for salicylate. Residues 561-586 (NLSGLSSSSSTTSPEKIGANQKVREP) form a disordered region. Residues 562–573 (LSGLSSSSSTTS) show a composition bias toward low complexity.

It belongs to the plant 'ANKYRIN-BTB/POZ' family. 'NPR1-like' subfamily. Highly expressed in leaves. Expressed at low levels in roots and stems.

The protein resides in the cytoplasm. It is found in the nucleus. Its subcellular location is the nuclear body. It functions in the pathway protein modification; protein ubiquitination. In terms of biological role, salicylic acid (SA)-binding substrate-specific adapter of an E3 ubiquitin-protein ligase complex (CUL3-RBX1-BTB) which mediates the ubiquitination and subsequent proteasomal degradation of target proteins. Transcription cofactor that represses gene expression in the absence of salicylic acid (SA), when attached to negative cis-elements (W-box) with WRKY transcription factors, but stimulates gene expression upon activation by SA, when sumoylated and attached to positive cis-elements (as-1) with TGA transcription factors, thus confering immunity through a series of gene regulations ending in a significant increase in antimicrobial and defense genes expression. Probable component of the salicylic acid (SA) defense signaling pathway and pathogen-induced systemic acquired resistance (SAR). May be involved in disease resistance against fungal pathogens. May be involved in tolerance to salt and osmotic stresses. The sequence is that of BTB/POZ domain and ankyrin repeat-containing protein NPR1 from Malus hupehensis (Chinese crab apple).